The sequence spans 48 residues: Acidic phospholipase A2 (48 aa).

The Ca(2+) site is built by Tyr27, Gly29, and Gly31. Cys28 and Cys44 are oxidised to a cystine. His47 is an active-site residue. Position 48 (Asp48) interacts with Ca(2+).

Belongs to the phospholipase A2 family. Group II subfamily. D49 sub-subfamily. Monomer. Ca(2+) is required as a cofactor. As to expression, expressed by the venom gland.

It is found in the secreted. The catalysed reaction is a 1,2-diacyl-sn-glycero-3-phosphocholine + H2O = a 1-acyl-sn-glycero-3-phosphocholine + a fatty acid + H(+). Its activity is regulated as follows. Inhibited by EDTA. Inhibited by Ba(2+), Cu(+), Fe(2+) and Zn(2+) ions and, to a lesser extent, by Mn(2+) and Mg(2+) ions. In terms of biological role, snake venom phospholipase A2 (PLA2) that shows myotoxicity and induces paw edema in mice. Exhibits indirect hemolytic activity. Inhibits platelet aggregation induced by ADP and collagen. PLA2 catalyzes the calcium-dependent hydrolysis of the 2-acyl groups in 3-sn-phosphoglycerides. In Bothrops pauloensis (Neuwied's lancehead), this protein is Acidic phospholipase A2.